A 536-amino-acid chain; its full sequence is Phosphoenolpyruvate carboxykinase (ATP) (536 aa).

Substrate-binding residues include Arg-61, Tyr-195, and Lys-201. ATP contacts are provided by residues Lys-201, His-220, and 236-244 (GLSGTGKTT). Mn(2+) is bound by residues Lys-201 and His-220. Asp-257 contacts Mn(2+). Residues Glu-285, Arg-322, and Thr-447 each contribute to the ATP site. Arg-322 contributes to the substrate binding site.

Belongs to the phosphoenolpyruvate carboxykinase (ATP) family. Requires Mn(2+) as cofactor.

It localises to the cytoplasm. It catalyses the reaction oxaloacetate + ATP = phosphoenolpyruvate + ADP + CO2. The protein operates within carbohydrate biosynthesis; gluconeogenesis. Involved in the gluconeogenesis. Catalyzes the conversion of oxaloacetate (OAA) to phosphoenolpyruvate (PEP) through direct phosphoryl transfer between the nucleoside triphosphate and OAA. The polypeptide is Phosphoenolpyruvate carboxykinase (ATP) (Brucella anthropi (strain ATCC 49188 / DSM 6882 / CCUG 24695 / JCM 21032 / LMG 3331 / NBRC 15819 / NCTC 12168 / Alc 37) (Ochrobactrum anthropi)).